Consider the following 157-residue polypeptide: 2-C-methyl-D-erythritol 2,4-cyclodiphosphate synthase (157 aa).

Residues Asp8 and His10 each contribute to the a divalent metal cation site. 4-CDP-2-C-methyl-D-erythritol 2-phosphate is bound by residues 8 to 10 (DVH) and 34 to 35 (HS). His42 provides a ligand contact to a divalent metal cation. 4-CDP-2-C-methyl-D-erythritol 2-phosphate contacts are provided by residues 56-58 (DIG), 61-65 (FPDTD), 100-106 (AQAPKMA), 132-135 (TTTE), Phe139, and Arg142.

The protein belongs to the IspF family. As to quaternary structure, homotrimer. A divalent metal cation is required as a cofactor.

It catalyses the reaction 4-CDP-2-C-methyl-D-erythritol 2-phosphate = 2-C-methyl-D-erythritol 2,4-cyclic diphosphate + CMP. It functions in the pathway isoprenoid biosynthesis; isopentenyl diphosphate biosynthesis via DXP pathway; isopentenyl diphosphate from 1-deoxy-D-xylulose 5-phosphate: step 4/6. Involved in the biosynthesis of isopentenyl diphosphate (IPP) and dimethylallyl diphosphate (DMAPP), two major building blocks of isoprenoid compounds. Catalyzes the conversion of 4-diphosphocytidyl-2-C-methyl-D-erythritol 2-phosphate (CDP-ME2P) to 2-C-methyl-D-erythritol 2,4-cyclodiphosphate (ME-CPP) with a corresponding release of cytidine 5-monophosphate (CMP). This chain is 2-C-methyl-D-erythritol 2,4-cyclodiphosphate synthase, found in Pseudomonas putida (strain GB-1).